The sequence spans 304 residues: Histone H1.8 (304 aa).

Low complexity predominate over residues 1 to 24; that stretch reads MAPGSVSSVSSSSFPSRDTSPSGS. Disordered regions lie at residues 1–38, 110–248, and 270–304; these read MAPG…PSCR, SKAK…NSVA, and TVQE…NTQA. The region spanning 45-123 is the H15 domain; that stretch reads RNPTMLHMVL…GATGSFKLVP (79 aa). Low complexity predominate over residues 132 to 144; the sequence is APKAGRGAAGAKE. 3 stretches are compositionally biased toward basic and acidic residues: residues 153–166, 189–202, and 225–237; these read LKKD…MEKG, KPKE…KQDK, and ANAH…EKSK. The short motif at 154–170 is the Nuclear localization signal element; the sequence is KKDQVGKATMEKGQKRR. Over residues 270–281 the composition is skewed to polar residues; that stretch reads TVQETKVPTPSQ.

This sequence belongs to the histone H1/H5 family. As to expression, oocyte-specific.

It is found in the cytoplasm. It localises to the nucleus. Its subcellular location is the chromosome. Functionally, may play a key role in the control of gene expression during oogenesis and early embryogenesis, presumably through the perturbation of chromatin structure. Essential for meiotic maturation of germinal vesicle-stage oocytes. The somatic type linker histone H1c is rapidly replaced by H1oo in a donor nucleus transplanted into an oocyte. The greater mobility of H1oo as compared to H1c may contribute to this rapid replacement and increased instability of the embryonic chromatin structure. The rapid replacement of H1c with H1oo may play an important role in nuclear remodeling. In Mus musculus (Mouse), this protein is Histone H1.8.